The sequence spans 121 residues: MSRIKRGTTTRAKHKRILDQAKGYYGRRKNTIRIARQAVEKAGQYAYRDRKVKKRSFRALWIQRINAAVRAEGLTYSQFMHGVKLAGIELDRKVMADLAMNEGGVFTAIVAQAKAALPKAA.

It belongs to the bacterial ribosomal protein bL20 family.

Functionally, binds directly to 23S ribosomal RNA and is necessary for the in vitro assembly process of the 50S ribosomal subunit. It is not involved in the protein synthesizing functions of that subunit. This Sphingopyxis alaskensis (strain DSM 13593 / LMG 18877 / RB2256) (Sphingomonas alaskensis) protein is Large ribosomal subunit protein bL20.